Reading from the N-terminus, the 444-residue chain is Trigger factor (444 aa).

The PPIase FKBP-type domain occupies 165-250 (GDFAKFDFEG…LHEIQELKIP (86 aa)).

The protein belongs to the FKBP-type PPIase family. Tig subfamily.

Its subcellular location is the cytoplasm. It catalyses the reaction [protein]-peptidylproline (omega=180) = [protein]-peptidylproline (omega=0). Involved in protein export. Acts as a chaperone by maintaining the newly synthesized protein in an open conformation. Functions as a peptidyl-prolyl cis-trans isomerase. This chain is Trigger factor, found in Campylobacter jejuni subsp. jejuni serotype O:6 (strain 81116 / NCTC 11828).